The chain runs to 357 residues: DNA integrity scanning protein DisA (357 aa).

The 139-residue stretch at 3–141 (RPTLRETVAR…GGERHVVADS (139 aa)) folds into the DAC domain. ATP is bound by residues glycine 70, leucine 88, and 101-105 (TRHRS).

Belongs to the DisA family. Homooctamer. Mg(2+) is required as a cofactor.

It catalyses the reaction 2 ATP = 3',3'-c-di-AMP + 2 diphosphate. Participates in a DNA-damage check-point. DisA forms globular foci that rapidly scan along the chromosomes searching for lesions. Its function is as follows. Also has diadenylate cyclase activity, catalyzing the condensation of 2 ATP molecules into cyclic di-AMP (c-di-AMP). c-di-AMP likely acts as a signaling molecule that may couple DNA integrity with a cellular process. The chain is DNA integrity scanning protein DisA from Mycobacterium avium (strain 104).